The chain runs to 358 residues: Transcription factor PCF6 (358 aa).

Residues 1–29 are disordered; it reads MEAAVGDGEGGGGGGGRGKRGRGGGGGEM. The span at 7–16 shows a compositional bias: gly residues; the sequence is DGEGGGGGGG. One can recognise a TCP domain in the interval 52 to 110; the sequence is GKDRHSKVYTAKGIRDRRVRLSVATAIQFYDLQDRLGFDQPSKAIEWLINAASPAIDTL. 2 disordered regions span residues 127-163 and 282-308; these read ADAA…DKEV and ANRG…QQLQ. Polar residues-rich tracts occupy residues 143–156 and 285–296; these read LSNK…SETS and GTLQSNSPSNMS.

Forms homodimers and heterodimers.

The protein localises to the nucleus. In terms of biological role, transcription activator. Binds the promoter core sequence 5'-GGNCC-3'. This chain is Transcription factor PCF6 (PCF6), found in Oryza sativa subsp. indica (Rice).